The primary structure comprises 261 residues: tRNA pseudouridine synthase A (261 aa).

The active-site Nucleophile is the Asp-51. Tyr-109 contributes to the substrate binding site.

This sequence belongs to the tRNA pseudouridine synthase TruA family. Homodimer.

It carries out the reaction uridine(38/39/40) in tRNA = pseudouridine(38/39/40) in tRNA. Functionally, formation of pseudouridine at positions 38, 39 and 40 in the anticodon stem and loop of transfer RNAs. This is tRNA pseudouridine synthase A from Shewanella woodyi (strain ATCC 51908 / MS32).